The following is a 394-amino-acid chain: Elongation factor Tu-A (394 aa).

The tr-type G domain maps to 10-204 (KPHVNVGTIG…HLDTYIPEPQ (195 aa)). A G1 region spans residues 19-26 (GHVDHGKT). Residue 19-26 (GHVDHGKT) participates in GTP binding. A Mg(2+)-binding site is contributed by threonine 26. The G2 stretch occupies residues 60–64 (GITIN). A G3 region spans residues 81-84 (DCPG). Residues 81–85 (DCPGH) and 136–139 (NKCD) contribute to the GTP site. Positions 136–139 (NKCD) are G4. Residues 174 to 176 (SAL) are G5.

The protein belongs to the TRAFAC class translation factor GTPase superfamily. Classic translation factor GTPase family. EF-Tu/EF-1A subfamily. Monomer.

Its subcellular location is the cytoplasm. It catalyses the reaction GTP + H2O = GDP + phosphate + H(+). Functionally, GTP hydrolase that promotes the GTP-dependent binding of aminoacyl-tRNA to the A-site of ribosomes during protein biosynthesis. The polypeptide is Elongation factor Tu-A (Pasteurella multocida (strain Pm70)).